The sequence spans 362 residues: Patr class I histocompatibility antigen, B-2 alpha chain (362 aa).

The first 24 residues, 1–24, serve as a signal peptide directing secretion; it reads MQVTAPRTVLLLLSAALALTETWA. Residues 25–114 are alpha-1; that stretch reads GSHSMKYFYT…LRGYYNQSEA (90 aa). Residues 25 to 308 lie on the Extracellular side of the membrane; it reads GSHSMKYFYT…EPSSQSTIPI (284 aa). Asparagine 110 carries an N-linked (GlcNAc...) asparagine glycan. Residues 115-206 form an alpha-2 region; the sequence is GSHIIQRMYG…ENGKETLQRA (92 aa). 2 cysteine pairs are disulfide-bonded: cysteine 125-cysteine 188 and cysteine 227-cysteine 283. The alpha-3 stretch occupies residues 207–298; it reads DPPKTHVTHH…GLPKPLTLRW (92 aa). In terms of domain architecture, Ig-like C1-type spans 209–295; the sequence is PKTHVTHHPI…QHEGLPKPLT (87 aa). Positions 299 to 308 are connecting peptide; sequence EPSSQSTIPI. The chain crosses the membrane as a helical span at residues 309 to 332; sequence VGIVAGLAVLAVVVIGAVVAAVMC. The Cytoplasmic portion of the chain corresponds to 333–362; it reads RRKSSGGKGGSYSQAASSDSAQGSDVSLTA. The segment at 336-362 is disordered; the sequence is SSGGKGGSYSQAASSDSAQGSDVSLTA. The segment covering 343–362 has biased composition (low complexity); sequence SYSQAASSDSAQGSDVSLTA.

The protein belongs to the MHC class I family. Heterodimer of an alpha chain and a beta chain (beta-2-microglobulin).

Its subcellular location is the membrane. Functionally, involved in the presentation of foreign antigens to the immune system. This chain is Patr class I histocompatibility antigen, B-2 alpha chain, found in Pan troglodytes (Chimpanzee).